Reading from the N-terminus, the 185-residue chain is Lipid A acyltransferase PagP (185 aa).

A signal peptide spans 1–24 (MKTHNDILAALAALPLFLTGAAFA). Residues H57, D100, and S101 contribute to the active site.

It belongs to the lipid A palmitoyltransferase family. In terms of assembly, homodimer.

It localises to the cell outer membrane. It catalyses the reaction a lipid A + a 1,2-diacyl-sn-glycero-3-phosphocholine = a hepta-acyl lipid A + a 2-acyl-sn-glycero-3-phosphocholine. The enzyme catalyses a lipid IVA + a 1,2-diacyl-sn-glycero-3-phosphocholine = a lipid IVB + a 2-acyl-sn-glycero-3-phosphocholine. The catalysed reaction is a lipid IIA + a 1,2-diacyl-sn-glycero-3-phosphocholine = a lipid IIB + a 2-acyl-sn-glycero-3-phosphocholine. Functionally, transfers a fatty acid residue from the sn-1 position of a phospholipid to the N-linked hydroxyfatty acid chain on the proximal unit of lipid A or its precursors. This chain is Lipid A acyltransferase PagP, found in Edwardsiella tarda (strain FL6-60).